The primary structure comprises 347 residues: Biotin synthase (347 aa).

A Radical SAM core domain is found at 40 to 258 (AQVQVSTLLS…IAVARIAMPR (219 aa)). C55, C59, and C62 together coordinate [4Fe-4S] cluster. Positions 99, 130, 190, and 262 each coordinate [2Fe-2S] cluster.

Belongs to the radical SAM superfamily. Biotin synthase family. Homodimer. It depends on [4Fe-4S] cluster as a cofactor. [2Fe-2S] cluster serves as cofactor.

The enzyme catalyses (4R,5S)-dethiobiotin + (sulfur carrier)-SH + 2 reduced [2Fe-2S]-[ferredoxin] + 2 S-adenosyl-L-methionine = (sulfur carrier)-H + biotin + 2 5'-deoxyadenosine + 2 L-methionine + 2 oxidized [2Fe-2S]-[ferredoxin]. It participates in cofactor biosynthesis; biotin biosynthesis; biotin from 7,8-diaminononanoate: step 2/2. Its function is as follows. Catalyzes the conversion of dethiobiotin (DTB) to biotin by the insertion of a sulfur atom into dethiobiotin via a radical-based mechanism. In Stenotrophomonas maltophilia (strain K279a), this protein is Biotin synthase.